The chain runs to 415 residues: Serine hydroxymethyltransferase (415 aa).

Residues leucine 121 and 125-127 (GHL) each bind (6S)-5,6,7,8-tetrahydrofolate. Lysine 230 carries the post-translational modification N6-(pyridoxal phosphate)lysine. 355–357 (SPF) contacts (6S)-5,6,7,8-tetrahydrofolate.

The protein belongs to the SHMT family. Homodimer. It depends on pyridoxal 5'-phosphate as a cofactor.

It is found in the cytoplasm. It catalyses the reaction (6R)-5,10-methylene-5,6,7,8-tetrahydrofolate + glycine + H2O = (6S)-5,6,7,8-tetrahydrofolate + L-serine. It functions in the pathway one-carbon metabolism; tetrahydrofolate interconversion. The protein operates within amino-acid biosynthesis; glycine biosynthesis; glycine from L-serine: step 1/1. Catalyzes the reversible interconversion of serine and glycine with tetrahydrofolate (THF) serving as the one-carbon carrier. This reaction serves as the major source of one-carbon groups required for the biosynthesis of purines, thymidylate, methionine, and other important biomolecules. Also exhibits THF-independent aldolase activity toward beta-hydroxyamino acids, producing glycine and aldehydes, via a retro-aldol mechanism. This chain is Serine hydroxymethyltransferase, found in Lactococcus lactis subsp. cremoris (strain SK11).